A 92-amino-acid chain; its full sequence is Small ribosomal subunit protein uS19c (92 aa).

Belongs to the universal ribosomal protein uS19 family.

Its subcellular location is the plastid. It is found in the cyanelle. Its function is as follows. Protein S19 forms a complex with S13 that binds strongly to the 16S ribosomal RNA. This chain is Small ribosomal subunit protein uS19c (rps19), found in Cyanophora paradoxa.